A 407-amino-acid polypeptide reads, in one-letter code: Imidazolonepropionase (407 aa).

Fe(3+)-binding residues include His-75 and His-77. Zn(2+)-binding residues include His-75 and His-77. Residues Arg-84, Tyr-147, and His-180 each coordinate 4-imidazolone-5-propanoate. N-formimidoyl-L-glutamate is bound at residue Tyr-147. Position 245 (His-245) interacts with Fe(3+). His-245 contributes to the Zn(2+) binding site. A 4-imidazolone-5-propanoate-binding site is contributed by Gln-248. Asp-320 contributes to the Fe(3+) binding site. Zn(2+) is bound at residue Asp-320. Residues Asn-322 and Gly-324 each coordinate N-formimidoyl-L-glutamate. Ser-325 serves as a coordination point for 4-imidazolone-5-propanoate.

It belongs to the metallo-dependent hydrolases superfamily. HutI family. Zn(2+) is required as a cofactor. It depends on Fe(3+) as a cofactor.

It is found in the cytoplasm. It catalyses the reaction 4-imidazolone-5-propanoate + H2O = N-formimidoyl-L-glutamate. The protein operates within amino-acid degradation; L-histidine degradation into L-glutamate; N-formimidoyl-L-glutamate from L-histidine: step 3/3. Functionally, catalyzes the hydrolytic cleavage of the carbon-nitrogen bond in imidazolone-5-propanoate to yield N-formimidoyl-L-glutamate. It is the third step in the universal histidine degradation pathway. This is Imidazolonepropionase from Pseudoalteromonas atlantica (strain T6c / ATCC BAA-1087).